We begin with the raw amino-acid sequence, 273 residues long: F-actin-capping protein subunit alpha (273 aa).

It belongs to the F-actin-capping protein alpha subunit family. As to quaternary structure, component of the F-actin capping complex, composed of a heterodimer of an alpha and a beta subunit.

The protein resides in the cytoplasm. It is found in the cytoskeleton. Its subcellular location is the actin patch. Its function is as follows. F-actin-capping proteins bind in a Ca(2+)-independent manner to the fast growing ends of actin filaments (barbed end) thereby blocking the exchange of subunits at these ends. Unlike other capping proteins (such as gelsolin and severin), these proteins do not sever actin filaments. In Aspergillus oryzae (strain ATCC 42149 / RIB 40) (Yellow koji mold), this protein is F-actin-capping protein subunit alpha (cap1).